Here is a 743-residue protein sequence, read N- to C-terminus: 1,4-alpha-glucan branching enzyme GlgB (743 aa).

Asp-423 (nucleophile) is an active-site residue. The active-site Proton donor is Glu-476.

The protein belongs to the glycosyl hydrolase 13 family. GlgB subfamily. As to quaternary structure, monomer.

The enzyme catalyses Transfers a segment of a (1-&gt;4)-alpha-D-glucan chain to a primary hydroxy group in a similar glucan chain.. It functions in the pathway glycan biosynthesis; glycogen biosynthesis. Functionally, catalyzes the formation of the alpha-1,6-glucosidic linkages in glycogen by scission of a 1,4-alpha-linked oligosaccharide from growing alpha-1,4-glucan chains and the subsequent attachment of the oligosaccharide to the alpha-1,6 position. The polypeptide is 1,4-alpha-glucan branching enzyme GlgB (Pseudomonas fluorescens (strain ATCC BAA-477 / NRRL B-23932 / Pf-5)).